Here is a 235-residue protein sequence, read N- to C-terminus: 1-Cys peroxiredoxin (235 aa).

In terms of domain architecture, Thioredoxin spans 5–179 (ILLGDKFPDF…ILRVVDSLQL (175 aa)). C49 is a catalytic residue. C49 acts as the Cysteine sulfenic acid (-SOH) intermediate in catalysis.

This sequence belongs to the peroxiredoxin family. Prx6 subfamily.

The protein localises to the cytoplasm. The enzyme catalyses a hydroperoxide + [protein]-dithiol = [protein]-disulfide + an alcohol + H2O. Its function is as follows. Thiol-specific peroxidase that catalyzes the reduction of hydrogen peroxide and organic hydroperoxides to water and alcohols, respectively. Plays a role in cell protection against oxidative stress by detoxifying peroxides. The polypeptide is 1-Cys peroxiredoxin (Dirofilaria immitis (Canine heartworm)).